We begin with the raw amino-acid sequence, 128 residues long: Early 4 ORF1 protein (128 aa).

Residues 1 to 26 (MAAAVEALYVVLEREGAILPRQEGFS) are Cytoplasmic-facing. A helical membrane pass occupies residues 27 to 47 (GVYVFFSPINFVIPPMGAVML). The Extracellular portion of the chain corresponds to 48–99 (SLRLRVCIPPGYFGRFLALTDVNQPDVFTESYIMTPDMTEELSVVLFNHGDQ). A helical membrane pass occupies residues 100–120 (FFYGHAGMAVVRLMLIRVVFP). Over 121-128 (VVRQASNV) the chain is Cytoplasmic. The PBZ domain binding motif motif lies at 125-128 (ASNV).

Belongs to the adenoviridae E4-ORF1 family. May interact with host PDZ proteins through the PDZ domain binding motif (PBM), namely host DLG1, PATJ and TJP2.

The protein resides in the host membrane. Functionally, may modulate tight-junctions functions of infected cells through interactions with PDZ proteins. E4 ORF1 has ben show for Adenovirus 9 to interact with protein involved in tight junction regulation. May play a role in mTOR activation by activating PI3-kinase, thus overriding cellular checkpoint for translation. This is Early 4 ORF1 protein from Human adenovirus C serotype 2 (HAdV-2).